We begin with the raw amino-acid sequence, 187 residues long: Probable DNA endonuclease SmrA (187 aa).

In terms of domain architecture, Smr spans 88–169; the sequence is LNLLRQPVEE…GSGACYVALR (82 aa).

Functionally, has DNA endonuclease activity. Binds DNA. The polypeptide is Probable DNA endonuclease SmrA (smrA) (Escherichia coli (strain K12)).